The following is a 182-amino-acid chain: Putative manganese efflux pump MntP 1 (182 aa).

6 helical membrane passes run 4-24, 42-62, 63-83, 103-123, 127-147, and 162-182; these read LLLL…GLGA, IFQG…IAFI, SAFD…KMIY, LILS…LHLI, VFLS…LGVL, and ILGG…HLFF.

It belongs to the MntP (TC 9.B.29) family.

It localises to the cell inner membrane. Probably functions as a manganese efflux pump. The sequence is that of Putative manganese efflux pump MntP 1 from Wolinella succinogenes (strain ATCC 29543 / DSM 1740 / CCUG 13145 / JCM 31913 / LMG 7466 / NCTC 11488 / FDC 602W) (Vibrio succinogenes).